A 938-amino-acid polypeptide reads, in one-letter code: Isoleucine--tRNA ligase (938 aa).

The short motif at 65–75 (PYANGSIHIGH) is the 'HIGH' region element. E568 provides a ligand contact to L-isoleucyl-5'-AMP. The 'KMSKS' region motif lies at 609–613 (KMSKS). K612 is an ATP binding site. Residues C905, C908, C921, and C924 each coordinate Zn(2+).

It belongs to the class-I aminoacyl-tRNA synthetase family. IleS type 1 subfamily. As to quaternary structure, monomer. Zn(2+) serves as cofactor.

The protein localises to the cytoplasm. It catalyses the reaction tRNA(Ile) + L-isoleucine + ATP = L-isoleucyl-tRNA(Ile) + AMP + diphosphate. In terms of biological role, catalyzes the attachment of isoleucine to tRNA(Ile). As IleRS can inadvertently accommodate and process structurally similar amino acids such as valine, to avoid such errors it has two additional distinct tRNA(Ile)-dependent editing activities. One activity is designated as 'pretransfer' editing and involves the hydrolysis of activated Val-AMP. The other activity is designated 'posttransfer' editing and involves deacylation of mischarged Val-tRNA(Ile). The polypeptide is Isoleucine--tRNA ligase (Mannheimia succiniciproducens (strain KCTC 0769BP / MBEL55E)).